Here is a 214-residue protein sequence, read N- to C-terminus: ATP phosphoribosyltransferase (214 aa).

This sequence belongs to the ATP phosphoribosyltransferase family. Short subfamily. Heteromultimer composed of HisG and HisZ subunits.

It is found in the cytoplasm. The catalysed reaction is 1-(5-phospho-beta-D-ribosyl)-ATP + diphosphate = 5-phospho-alpha-D-ribose 1-diphosphate + ATP. Its pathway is amino-acid biosynthesis; L-histidine biosynthesis; L-histidine from 5-phospho-alpha-D-ribose 1-diphosphate: step 1/9. Its function is as follows. Catalyzes the condensation of ATP and 5-phosphoribose 1-diphosphate to form N'-(5'-phosphoribosyl)-ATP (PR-ATP). Has a crucial role in the pathway because the rate of histidine biosynthesis seems to be controlled primarily by regulation of HisG enzymatic activity. In Deinococcus deserti (strain DSM 17065 / CIP 109153 / LMG 22923 / VCD115), this protein is ATP phosphoribosyltransferase.